The sequence spans 465 residues: MRLLVCFGFFSFTYFFSRKGTRSYFRWVSTETSNNTRSKCHKLKSESIMTTSLLSRMQIDRDLRRSTEHVEIVPQETCVHHESPDSVLTECATMSTSTHVMPNSSSTISKSATEKKTKTGSKKVTRSKKSKKTKRRSSTTVTTTTISNSKPVTPDKDKDSKDQRKQRTKRKDPFEKEWFGKECDDVTRCKVPIQEFKIAEVQLRPRIEEDQNIEVTSRDIDEADMERICKKFAKEKINPITMAEPIDEKTKILLDRVTKKPYPLKYNNEKGLLLFDERSSFYKSREKKKAEKSESNLEEDTYGQVPKLKDVQRLPPQNVFSRPGVPFWAVTLLPTEEDLVDVDPSISVGTEHLEMYHLKQVPLQTIKKSKLILNALQPLSILEDRDDIHFTPELVFSNTIRSLVHAQEMEGKRNESKSDDEGKSDKSLSFVIEKQEEFIYSRANPIETARMARRNRRSKGSSSKK.

Disordered regions lie at residues 95–173, 407–426, and 443–465; these read STST…RKDP, QEMEGKRNESKSDDEGKSDK, and ANPIETARMARRNRRSKGSSSKK. Basic residues predominate over residues 118–137; sequence KTGSKKVTRSKKSKKTKRRS. The segment covering 138–150 has biased composition (low complexity); that stretch reads STTVTTTTISNSK. A compositionally biased stretch (basic and acidic residues) spans 153–173; sequence TPDKDKDSKDQRKQRTKRKDP. The span at 451–465 shows a compositional bias: basic residues; sequence MARRNRRSKGSSSKK.

This is an uncharacterized protein from Caenorhabditis elegans.